A 229-amino-acid chain; its full sequence is Ribonuclease T (229 aa).

Residues 23-197 (VIIDVETAGF…YDTERTAKLF (175 aa)) enclose the Exonuclease domain. The Mg(2+) site is built by Asp-26, Glu-28, His-184, and Asp-189. The active-site Proton donor/acceptor is His-184.

This sequence belongs to the RNase T family. In terms of assembly, homodimer. Mg(2+) serves as cofactor.

Functionally, trims short 3' overhangs of a variety of RNA species, leaving a one or two nucleotide 3' overhang. Responsible for the end-turnover of tRNA: specifically removes the terminal AMP residue from uncharged tRNA (tRNA-C-C-A). Also appears to be involved in tRNA biosynthesis. This Haemophilus influenzae (strain 86-028NP) protein is Ribonuclease T.